Reading from the N-terminus, the 284-residue chain is Efem/EfeO family lipoprotein (284 aa).

Residues Met1–Ala17 form the signal peptide. Cys18 is lipidated: N-palmitoyl cysteine. The S-diacylglycerol cysteine moiety is linked to residue Cys18.

This sequence belongs to the EfeM/EfeO family.

It localises to the cell membrane. This is Efem/EfeO family lipoprotein from Staphylococcus aureus (strain USA300).